A 120-amino-acid polypeptide reads, in one-letter code: Large ribosomal subunit protein bL19 (120 aa).

The protein belongs to the bacterial ribosomal protein bL19 family.

Functionally, this protein is located at the 30S-50S ribosomal subunit interface and may play a role in the structure and function of the aminoacyl-tRNA binding site. This chain is Large ribosomal subunit protein bL19, found in Dichelobacter nodosus (strain VCS1703A).